Reading from the N-terminus, the 459-residue chain is Ribulose bisphosphate carboxylase large chain (459 aa).

K4 carries the N6,N6,N6-trimethyllysine modification. N113 and T163 together coordinate substrate. K165 (proton acceptor) is an active-site residue. K167 is a substrate binding site. The Mg(2+) site is built by K191, D193, and E194. Position 191 is an N6-carboxylysine (K191). Catalysis depends on H284, which acts as the Proton acceptor. Substrate contacts are provided by R285, H317, and S369.

Belongs to the RuBisCO large chain family. Type I subfamily. As to quaternary structure, heterohexadecamer of 8 large chains and 8 small chains; disulfide-linked. The disulfide link is formed within the large subunit homodimers. The cofactor is Mg(2+). In terms of processing, the disulfide bond which can form in the large chain dimeric partners within the hexadecamer appears to be associated with oxidative stress and protein turnover.

Its subcellular location is the plastid. It is found in the chloroplast. It catalyses the reaction 2 (2R)-3-phosphoglycerate + 2 H(+) = D-ribulose 1,5-bisphosphate + CO2 + H2O. The enzyme catalyses D-ribulose 1,5-bisphosphate + O2 = 2-phosphoglycolate + (2R)-3-phosphoglycerate + 2 H(+). Functionally, ruBisCO catalyzes two reactions: the carboxylation of D-ribulose 1,5-bisphosphate, the primary event in carbon dioxide fixation, as well as the oxidative fragmentation of the pentose substrate in the photorespiration process. Both reactions occur simultaneously and in competition at the same active site. The polypeptide is Ribulose bisphosphate carboxylase large chain (Geum quellyon (Chilean avens)).